A 347-amino-acid polypeptide reads, in one-letter code: D-alanine--D-alanine ligase (347 aa).

An ATP-grasp domain is found at 131–333 (KRVLESAGIA…YPDLIERLVE (203 aa)). Position 161 to 216 (161 to 216 (EEELTYPVFTKPSNMGSSVGISKSENQEELRQALKLAFQYDSRVLVEQGVNAREIE)) interacts with ATP. Positions 287, 300, and 302 each coordinate Mg(2+).

It belongs to the D-alanine--D-alanine ligase family. Requires Mg(2+) as cofactor. Mn(2+) serves as cofactor.

The protein resides in the cytoplasm. The enzyme catalyses 2 D-alanine + ATP = D-alanyl-D-alanine + ADP + phosphate + H(+). It participates in cell wall biogenesis; peptidoglycan biosynthesis. Its function is as follows. Cell wall formation. The sequence is that of D-alanine--D-alanine ligase from Streptococcus pneumoniae (strain Hungary19A-6).